We begin with the raw amino-acid sequence, 554 residues long: CTP synthase (554 aa).

The amidoligase domain stretch occupies residues 1–265 (MTPLIFVTGG…DEIVIDQFKL (265 aa)). Ser-13 is a CTP binding site. Position 13 (Ser-13) interacts with UTP. ATP-binding positions include 14 to 19 (SLGKGI) and Asp-71. 2 residues coordinate Mg(2+): Asp-71 and Glu-139. CTP is bound by residues 146 to 148 (DIE), 186 to 191 (KTKPTQ), and Lys-222. Residues 186-191 (KTKPTQ) and Lys-222 each bind UTP. The region spanning 292–545 (TIAVVGKYVD…VKASRARKAG (254 aa)) is the Glutamine amidotransferase type-1 domain. Gly-353 provides a ligand contact to L-glutamine. Catalysis depends on Cys-380, which acts as the Nucleophile; for glutamine hydrolysis. Residues 381-384 (YGMQ), Glu-404, and Arg-471 each bind L-glutamine. Active-site residues include His-518 and Glu-520.

The protein belongs to the CTP synthase family. As to quaternary structure, homotetramer.

It catalyses the reaction UTP + L-glutamine + ATP + H2O = CTP + L-glutamate + ADP + phosphate + 2 H(+). It carries out the reaction L-glutamine + H2O = L-glutamate + NH4(+). The catalysed reaction is UTP + NH4(+) + ATP = CTP + ADP + phosphate + 2 H(+). The protein operates within pyrimidine metabolism; CTP biosynthesis via de novo pathway; CTP from UDP: step 2/2. Its activity is regulated as follows. Allosterically activated by GTP, when glutamine is the substrate; GTP has no effect on the reaction when ammonia is the substrate. The allosteric effector GTP functions by stabilizing the protein conformation that binds the tetrahedral intermediate(s) formed during glutamine hydrolysis. Inhibited by the product CTP, via allosteric rather than competitive inhibition. Its function is as follows. Catalyzes the ATP-dependent amination of UTP to CTP with either L-glutamine or ammonia as the source of nitrogen. Regulates intracellular CTP levels through interactions with the four ribonucleotide triphosphates. The protein is CTP synthase of Xylella fastidiosa (strain M12).